The sequence spans 392 residues: MTQIYHQYKKKLSTKVILLSALTLCITFSLPYANAERYPDVPVAFKYGTGARVDNHLYVGLGSAGQSWYRLDTDKASSGWQKIADFPGQPREQAVTVALSGKLYVFGGVGKNSASDTQVRALDDVYQYDPQTNQWQRLATRAPRGLVGTAATTLNGTQALLLGGVNKAIFDGYFTDLAAAGGNETQKNAVVNAYFDQAPADYFYNRDVLMYDPAKNQWKSGGQVPFLGTAGSAITAKKGDLILINGEIKPGLRTAAVWQGKTQGTELKWQQRPDLIGAEKGAVQEGLAGAFAGVSHDVVLVGGGANFPGSWQQFNAGQLYAHQGLKKQWQQPIYALVDNQWQVAGKLPQPLAYGVSIQDKDKVILLGGETSDGVATSAVTQLSWQGGKLHLE.

The first 35 residues, Met-1–Ala-35, serve as a signal peptide directing secretion. Kelch repeat units lie at residues His-56–Ser-100, Lys-102–Asn-155, Thr-157–Asn-192, Ala-193–Lys-238, Leu-241–Ala-290, Gln-312–Asp-361, and Val-363–Glu-392. Glu-247 functions as the Proton acceptor in the catalytic mechanism.

The protein belongs to the NanM family. As to quaternary structure, homodimer.

It is found in the periplasm. The enzyme catalyses N-acetyl-alpha-neuraminate = N-acetyl-beta-neuraminate. In terms of biological role, converts alpha-N-acetylneuranimic acid (Neu5Ac) to the beta-anomer, accelerating the equilibrium between the alpha- and beta-anomers. Probably facilitates sialidase-negative bacteria to compete successfully for limited amounts of extracellular Neu5Ac, which is likely taken up in the beta-anomer. In addition, the rapid removal of sialic acid from solution might be advantageous to the bacterium to damp down host responses. This is N-acetylneuraminate epimerase from Yersinia enterocolitica serotype O:8 / biotype 1B (strain NCTC 13174 / 8081).